A 345-amino-acid polypeptide reads, in one-letter code: G-protein coupled receptor str-33 (345 aa).

Residues 1–11 (MTVNLRDLSRT) lie on the Extracellular side of the membrane. A helical membrane pass occupies residues 12-32 (IAEFAFLTALVCNSLLIYLTA). Residues 33–37 (RRTKN) lie on the Cytoplasmic side of the membrane. Residues 38-58 (ITGAYKYMIILFALLGLIFSC) form a helical membrane-spanning segment. The Extracellular portion of the chain corresponds to 59-92 (TEMLARPFVHNFNASFVYFSLSNDLSEFKSLVQM). A glycan (N-linked (GlcNAc...) asparagine) is linked at Asn-71. A helical transmembrane segment spans residues 93–113 (LLVLYSGLYSSLISFVAVQFI). Residues 114–133 (YRYMVLVNANLLESWFTGWK) lie on the Cytoplasmic side of the membrane. The chain crosses the membrane as a helical span at residues 134-154 (LVFWVFYVIFFGFAWSASVYF). The Extracellular portion of the chain corresponds to 155–204 (CLFPDTYSYNYIRTEFKDVYNIGVDRVAIFILVAYEKHPSSEEYKLRPAS). A helical transmembrane segment spans residues 205–225 (VIMIAGTISILVIQYSIMLFC). Residues 226 to 258 (GASMHRQMNEKLKNFSPDNQRLQKQFFKTLLLQ) lie on the Cytoplasmic side of the membrane. A helical transmembrane segment spans residues 259–279 (ISVPTVLFHMPIFPVLLGPFF). The Extracellular segment spans residues 280–288 (NFEISAESG). The helical transmembrane segment at 289 to 309 (IIYSLFSLYPPIDGLIIMTVV) threads the bilayer. Topologically, residues 310 to 345 (TDYRIALTELFLGSHSGAQVEVIPVEVVSILNFSLL) are cytoplasmic.

Belongs to the nematode receptor-like protein str family. As to expression, detected in ALM and PLM mechanosensory neurons and head neurons.

Its subcellular location is the cell membrane. Its function is as follows. Regulates egg-laying and locomotion. Likely to act upstream of goa-1 to suppress 5-hydroxytryptamine (5-HT) biosynthesis in hermaphrodite-specific neurons (HSNs) through inhibition of tph-1 transcription. In Caenorhabditis elegans, this protein is G-protein coupled receptor str-33.